We begin with the raw amino-acid sequence, 131 residues long: Holo-[acyl-carrier-protein] synthase (131 aa).

Mg(2+) is bound by residues aspartate 8 and glutamate 59.

It belongs to the P-Pant transferase superfamily. AcpS family. Requires Mg(2+) as cofactor.

It localises to the cytoplasm. The enzyme catalyses apo-[ACP] + CoA = holo-[ACP] + adenosine 3',5'-bisphosphate + H(+). In terms of biological role, transfers the 4'-phosphopantetheine moiety from coenzyme A to a Ser of acyl-carrier-protein. The chain is Holo-[acyl-carrier-protein] synthase from Paramagnetospirillum magneticum (strain ATCC 700264 / AMB-1) (Magnetospirillum magneticum).